The sequence spans 496 residues: Flotillin-like protein 3 (496 aa).

Residue C37 is the site of S-palmitoyl cysteine attachment. The stretch at 301 to 328 (VVREAELQLEVERKNALRLTEKLKAEKL) forms a coiled coil.

This sequence belongs to the band 7/mec-2 family. Flotillin subfamily. Post-translationally, may be palmitoylated.

Its subcellular location is the cell membrane. The protein resides in the membrane. It localises to the caveola. Its function is as follows. May act as a scaffolding protein within caveolar membranes, functionally participating in formation of caveolae or caveolae-like vesicles. The protein is Flotillin-like protein 3 (FLOT3) of Oryza sativa subsp. japonica (Rice).